The primary structure comprises 167 residues: NADH-quinone oxidoreductase subunit I (167 aa).

4Fe-4S ferredoxin-type domains lie at 59-88 and 98-127; these read RKYK…IEAQ and VRYD…EGPN. [4Fe-4S] cluster-binding residues include cysteine 68, cysteine 71, cysteine 74, cysteine 78, cysteine 107, cysteine 110, cysteine 113, and cysteine 117.

This sequence belongs to the complex I 23 kDa subunit family. As to quaternary structure, NDH-1 is composed of 14 different subunits. Subunits NuoA, H, J, K, L, M, N constitute the membrane sector of the complex. It depends on [4Fe-4S] cluster as a cofactor.

It localises to the cell inner membrane. The catalysed reaction is a quinone + NADH + 5 H(+)(in) = a quinol + NAD(+) + 4 H(+)(out). Functionally, NDH-1 shuttles electrons from NADH, via FMN and iron-sulfur (Fe-S) centers, to quinones in the respiratory chain. The immediate electron acceptor for the enzyme in this species is believed to be ubiquinone. Couples the redox reaction to proton translocation (for every two electrons transferred, four hydrogen ions are translocated across the cytoplasmic membrane), and thus conserves the redox energy in a proton gradient. This chain is NADH-quinone oxidoreductase subunit I, found in Ehrlichia canis (strain Jake).